The primary structure comprises 382 residues: MRYLTAGESHGPQLTAIIEGLPAQLPLGKADIDPWLRKRQGGYGRGRRMVIETDEAELLSGVRAGRTTGAPVTLAIQNKDHRNWTEIMSPEPGGEPRKKALTDARPGHADLTGGIKYRHKDLRDVLERASARETAARVAVGSIALKLLSELGIEGANYVFNLAGIETRQAFSWDALDAIEDSDLRTPDADAAAQMRERIDQAKKDGDTLGGILEVRFRGLPVGLGSFVHYDRKLDGKIAQACLSVQAMKGVEIGRAFENAVKPGSGVHDAIHYREGTYARDTNGAGGLEAGMTNGEELIVRVAMKPIATLMKPLPTVNVVTHEASDAARERSDTTAVPAAGVILQCVIGWVLAEAITEKFGGDTLPELQERLAAARRYAAEY.

Positions 39 and 45 each coordinate NADP(+). The disordered stretch occupies residues 89–113 (SPEPGGEPRKKALTDARPGHADLTG). A compositionally biased stretch (basic and acidic residues) spans 94–108 (GEPRKKALTDARPGH). Residues 128 to 130 (RAS), 246 to 247 (QA), Ala-290, 305 to 309 (KPIAT), and Arg-331 contribute to the FMN site.

Belongs to the chorismate synthase family. As to quaternary structure, homotetramer. FMNH2 is required as a cofactor.

The catalysed reaction is 5-O-(1-carboxyvinyl)-3-phosphoshikimate = chorismate + phosphate. Its pathway is metabolic intermediate biosynthesis; chorismate biosynthesis; chorismate from D-erythrose 4-phosphate and phosphoenolpyruvate: step 7/7. In terms of biological role, catalyzes the anti-1,4-elimination of the C-3 phosphate and the C-6 proR hydrogen from 5-enolpyruvylshikimate-3-phosphate (EPSP) to yield chorismate, which is the branch point compound that serves as the starting substrate for the three terminal pathways of aromatic amino acid biosynthesis. This reaction introduces a second double bond into the aromatic ring system. In Deinococcus radiodurans (strain ATCC 13939 / DSM 20539 / JCM 16871 / CCUG 27074 / LMG 4051 / NBRC 15346 / NCIMB 9279 / VKM B-1422 / R1), this protein is Chorismate synthase.